A 107-amino-acid chain; its full sequence is Insulin (107 aa).

Residues 1–24 form the signal peptide; the sequence is MALWIRSLPLLALLVFSGPGTSYA. 3 disulfides stabilise this stretch: Cys31-Cys93, Cys43-Cys106, and Cys92-Cys97. The propeptide at 57–84 is c peptide; sequence DVEQPLVSSPLRGEAGVLPFQQEEYEKV.

It belongs to the insulin family. In terms of assembly, heterodimer of a B chain and an A chain linked by two disulfide bonds.

The protein resides in the secreted. In terms of biological role, insulin decreases blood glucose concentration. It increases cell permeability to monosaccharides, amino acids and fatty acids. It accelerates glycolysis, the pentose phosphate cycle, and glycogen synthesis in liver. This chain is Insulin (INS), found in Gallus gallus (Chicken).